The chain runs to 588 residues: Transport ATP-binding protein AarD (588 aa).

One can recognise an ABC transmembrane type-1 domain in the interval L24–Q316. Transmembrane regions (helical) follow at residues L29 to L49, L62 to I82, I149 to L169, F170 to A190, S250 to F270, and L276 to L296. Positions I350 to H583 constitute an ABC transporter domain. ATP is bound at residue G383–S390.

This sequence belongs to the ABC transporter superfamily.

It is found in the cell inner membrane. Functionally, somehow involved in the cytochrome D branch of aerobic respiration. Seems to be a component of a transport system. The chain is Transport ATP-binding protein AarD (aarD) from Providencia stuartii.